The sequence spans 441 residues: Coiled-coil domain-containing protein 91 (441 aa).

Residues Met1–Asp16 are GGA1-binding motif. The segment at Met1 to Ser26 is disordered. Residues Ser43 and Ser46 each carry the phosphoserine modification. 2 coiled-coil regions span residues Ser130–Ala209 and Glu249–Asp407. The interval Leu210 to Arg413 is homodimerization.

In terms of assembly, homodimer. Interacts with GGA1, GGA2 and AP1G1. Widely expressed.

The protein resides in the membrane. It localises to the golgi apparatus. It is found in the trans-Golgi network membrane. The protein localises to the trans-Golgi network. Functionally, involved in the regulation of membrane traffic through the trans-Golgi network (TGN). Functions in close cooperation with the GGAs in the sorting of hydrolases to lysosomes. This is Coiled-coil domain-containing protein 91 (CCDC91) from Homo sapiens (Human).